A 315-amino-acid polypeptide reads, in one-letter code: Glutaminase (315 aa).

S70, N120, E166, N173, Y197, Y249, and V267 together coordinate substrate.

It belongs to the glutaminase family. In terms of assembly, homotetramer.

It catalyses the reaction L-glutamine + H2O = L-glutamate + NH4(+). This Mesorhizobium japonicum (strain LMG 29417 / CECT 9101 / MAFF 303099) (Mesorhizobium loti (strain MAFF 303099)) protein is Glutaminase.